A 287-amino-acid chain; its full sequence is ATP synthase gamma chain (287 aa).

The protein belongs to the ATPase gamma chain family. F-type ATPases have 2 components, CF(1) - the catalytic core - and CF(0) - the membrane proton channel. CF(1) has five subunits: alpha(3), beta(3), gamma(1), delta(1), epsilon(1). CF(0) has three main subunits: a, b and c.

Its subcellular location is the cell inner membrane. In terms of biological role, produces ATP from ADP in the presence of a proton gradient across the membrane. The gamma chain is believed to be important in regulating ATPase activity and the flow of protons through the CF(0) complex. This chain is ATP synthase gamma chain, found in Yersinia enterocolitica serotype O:8 / biotype 1B (strain NCTC 13174 / 8081).